The following is a 145-amino-acid chain: 3-dehydroquinate dehydratase (145 aa).

Y24 (proton acceptor) is an active-site residue. The substrate site is built by N75, H81, and D88. Residue H101 is the Proton donor of the active site. Residues 102 to 103 and R112 each bind substrate; that span reads LS.

The protein belongs to the type-II 3-dehydroquinase family. Homododecamer.

The enzyme catalyses 3-dehydroquinate = 3-dehydroshikimate + H2O. It functions in the pathway metabolic intermediate biosynthesis; chorismate biosynthesis; chorismate from D-erythrose 4-phosphate and phosphoenolpyruvate: step 3/7. Catalyzes a trans-dehydration via an enolate intermediate. The protein is 3-dehydroquinate dehydratase of Phenylobacterium zucineum (strain HLK1).